Consider the following 532-residue polypeptide: SET and MYND domain-containing protein DDB_G0288495 (532 aa).

Positions 25-448 constitute an SET domain; sequence PWIEVKSVSE…ENQELLITYI (424 aa). An MYND-type; degenerate zinc finger spans residues 70-116; sequence CTTCFKILLESNRHNFQTCPSCFQVNYCSNYCKQYSKIETKHTELEC. Residues 199-240 are a coiled coil; the sequence is INSKNNNEFENEEEEEEEQEQKGEGEQEENENNENNEKVKKK. Residues 204–234 are disordered; sequence NNEFENEEEEEEEQEQKGEGEQEENENNENN. Residues 207–217 show a composition bias toward acidic residues; the sequence is FENEEEEEEEQ.

The protein belongs to the class V-like SAM-binding methyltransferase superfamily.

Probable methyltransferase. This Dictyostelium discoideum (Social amoeba) protein is SET and MYND domain-containing protein DDB_G0288495.